The chain runs to 868 residues: MKSADIRQAFLTFFEEHGHTIVPSSSLVPANDPTLLFTNAGMVPFKDVFLGRDPRPYVRATSAQRCVRAGGKHNDLDNVGYTARHHTFFEMLGNFSFGDYFKRGAIRFAWTFLTERLGLPADKLWVTVHVSDDEAERIWKDEIGIDPARFSKLDEDNFWQMGDTGPCGPSSEIFFDHGPEVAGGPPGSPEEDGDRYIEIWNLVFMQFDRDSAGTLNPLPKPSIDTGMGLERVAAVLQGVHSNYEIDLFQNLLNAASEATGYDDTSAPSLRVIADHIRSCAFLITDDVLPSNEGRGYVLRRIIRRAIRHGHKLGAREPFFHTLVAALDAEMGAAYPELRKARPRIEKVLLKEEEQFARTLDHGMGLLTEALETLDGEVLPGETVFKLYDTYGFPFDLTADVCRERGVTLDEVGFQRELEAQRERARAASQFGADYTAALDLEGETAFTGYERLEDEARVTALVDREGNALAALEAGQHGVVVLDRTPFYGESGGQAGDTGYLEADGMRFQVTDTQKQGGHHLHHGVLVEGRLDVGASVTPRVDASLRAATMRNHSATHLLHEALRQVLGEHVQQKGSLVTAERLRFDVSHFEAMTRAQLDEVERIVNAQILANAATRIEHMTLDEAKAKGAAALFEAKYADSVRVLTIGADDFSIELCGGTHVARSGDIGCFHILSEAGVAAGVRRIEAVTGEGALAYFRDQEAKVARVAEQLKAKPEQVEARLEATLERNRTLEKELERLKAKLASATSGDMLADVREVAGVKLLAKQVEGVGGKELRGLLDQLKNKLGSGVIVLGVAGDEKVSLIAGVTDDLTARLKAGDLVKHVAEQVGGKGGGRADMAQAGGSRPQALPDALASVPSWVEARLGE.

Residues histidine 553, histidine 557, cysteine 657, and histidine 661 each contribute to the Zn(2+) site. Positions 831–851 (GGKGGGRADMAQAGGSRPQAL) are disordered.

It belongs to the class-II aminoacyl-tRNA synthetase family. Requires Zn(2+) as cofactor.

Its subcellular location is the cytoplasm. The enzyme catalyses tRNA(Ala) + L-alanine + ATP = L-alanyl-tRNA(Ala) + AMP + diphosphate. Functionally, catalyzes the attachment of alanine to tRNA(Ala) in a two-step reaction: alanine is first activated by ATP to form Ala-AMP and then transferred to the acceptor end of tRNA(Ala). Also edits incorrectly charged Ser-tRNA(Ala) and Gly-tRNA(Ala) via its editing domain. The protein is Alanine--tRNA ligase of Chromohalobacter salexigens (strain ATCC BAA-138 / DSM 3043 / CIP 106854 / NCIMB 13768 / 1H11).